A 263-amino-acid chain; its full sequence is Eukaryotic translation initiation factor 3 subunit J-B (263 aa).

Residues 1 to 13 (MAAAAAAAAAAAA) are compositionally biased toward low complexity. The segment at 1-115 (MAAAAAAAAA…EPEESKVLTP (115 aa)) is disordered. Residue alanine 2 is modified to N-acetylalanine. Residues 6 to 74 (AAAAAAAAGD…KEEAEVKPEV (69 aa)) are sufficient for interaction with EIF3B. Phosphoserine is present on residues serine 16, serine 18, and serine 25. A compositionally biased stretch (acidic residues) spans 45–66 (EGEDEDEDVKDNWDDDDDENKE). The span at 67-111 (EAEVKPEVKISEKKKIAEKIKEKERQQKKRQEEIKKRLEEPEESK) shows a compositional bias: basic and acidic residues. A coiled-coil region spans residues 75 to 140 (KISEKKKIAE…ESDLELAKET (66 aa)). A Glycyl lysine isopeptide (Lys-Gly) (interchain with G-Cter in SUMO2) cross-link involves residue lysine 111. The residue at position 114 (threonine 114) is a Phosphothreonine. Serine 132 carries the post-translational modification Phosphoserine. The interval 248–263 (YGGYEGGYVQDYEDFM) is promotes stable association with the 40S ribosome. Tyrosine 259 bears the Phosphotyrosine mark.

Belongs to the eIF-3 subunit J family. As to quaternary structure, component of the eukaryotic translation initiation factor 3 (eIF-3) complex, which is composed of 13 subunits: EIF3A, EIF3B, EIF3C, EIF3D, EIF3E, EIF3F, EIF3G, EIF3H, EIF3I, EIF3J, EIF3K, EIF3L and EIF3M. The eIF-3 complex appears to include 3 stable modules: module A is composed of EIF3A, EIF3B, EIF3G and EIF3I; module B is composed of EIF3F, EIF3H, and EIF3M; and module C is composed of EIF3C, EIF3D, EIF3E, EIF3K and EIF3L. EIF3C of module C binds EIF3B of module A and EIF3H of module B, thereby linking the three modules. EIF3J is a labile subunit that binds to the eIF-3 complex via EIF3B. The eIF-3 complex interacts with RPS6KB1 under conditions of nutrient depletion. Mitogenic stimulation leads to binding and activation of a complex composed of MTOR and RPTOR, leading to phosphorylation and release of RPS6KB1 and binding of EIF4B to eIF-3. Phosphorylated. Phosphorylation is enhanced upon serum stimulation.

Its subcellular location is the cytoplasm. Its function is as follows. Component of the eukaryotic translation initiation factor 3 (eIF-3) complex, which is required for several steps in the initiation of protein synthesis. The eIF-3 complex associates with the 40S ribosome and facilitates the recruitment of eIF-1, eIF-1A, eIF-2:GTP:methionyl-tRNAi and eIF-5 to form the 43S pre-initiation complex (43S PIC). The eIF-3 complex stimulates mRNA recruitment to the 43S PIC and scanning of the mRNA for AUG recognition. The eIF-3 complex is also required for disassembly and recycling of post-termination ribosomal complexes and subsequently prevents premature joining of the 40S and 60S ribosomal subunits prior to initiation. The eIF-3 complex specifically targets and initiates translation of a subset of mRNAs involved in cell proliferation, including cell cycling, differentiation and apoptosis, and uses different modes of RNA stem-loop binding to exert either translational activation or repression. This subunit binds directly within the mRNA entry channel of the 40S ribosome to the aminoacyl (A) site. It may regulate the interaction between the 43S PIC and mRNA. This chain is Eukaryotic translation initiation factor 3 subunit J-B (Eif3j2), found in Mus musculus (Mouse).